The sequence spans 481 residues: Cysteine--tRNA ligase (481 aa).

Cys29 is a Zn(2+) binding site. The 'HIGH' region motif lies at 31–41 (PTVYDYSHLGH). Cys210, His235, and Glu239 together coordinate Zn(2+). The short motif at 272-276 (KMSKS) is the 'KMSKS' region element. Lys275 provides a ligand contact to ATP.

This sequence belongs to the class-I aminoacyl-tRNA synthetase family. Monomer. It depends on Zn(2+) as a cofactor.

The protein localises to the cytoplasm. It catalyses the reaction tRNA(Cys) + L-cysteine + ATP = L-cysteinyl-tRNA(Cys) + AMP + diphosphate. In Anaeromyxobacter dehalogenans (strain 2CP-C), this protein is Cysteine--tRNA ligase.